A 184-amino-acid polypeptide reads, in one-letter code: Threonylcarbamoyl-AMP synthase (184 aa).

The 184-residue stretch at 1–184 folds into the YrdC-like domain; the sequence is MNNLENIVEQ…IFTQHIFRQG (184 aa).

The protein belongs to the SUA5 family. TsaC subfamily.

It is found in the cytoplasm. The catalysed reaction is L-threonine + hydrogencarbonate + ATP = L-threonylcarbamoyladenylate + diphosphate + H2O. Functionally, required for the formation of a threonylcarbamoyl group on adenosine at position 37 (t(6)A37) in tRNAs that read codons beginning with adenine. Catalyzes the conversion of L-threonine, HCO(3)(-)/CO(2) and ATP to give threonylcarbamoyl-AMP (TC-AMP) as the acyladenylate intermediate, with the release of diphosphate. This Actinobacillus pleuropneumoniae serotype 7 (strain AP76) protein is Threonylcarbamoyl-AMP synthase.